The primary structure comprises 301 residues: Probable alpha-L-glutamate ligase (301 aa).

The region spanning 104 to 287 (LQLLSRKGIG…IAGLIVAYME (184 aa)) is the ATP-grasp domain. Residues K141, 178-179 (EF), D187, and 211-213 (RSN) each bind ATP. The Mg(2+) site is built by D248, E260, and N262. Positions 248, 260, and 262 each coordinate Mn(2+).

Belongs to the RimK family. Mg(2+) is required as a cofactor. Mn(2+) serves as cofactor.

The protein is Probable alpha-L-glutamate ligase of Cellvibrio japonicus (strain Ueda107) (Pseudomonas fluorescens subsp. cellulosa).